The chain runs to 232 residues: Ubiquinone biosynthesis O-methyltransferase (232 aa).

Residues Arg36, Gly55, Asp76, and Leu120 each coordinate S-adenosyl-L-methionine.

It belongs to the methyltransferase superfamily. UbiG/COQ3 family.

It catalyses the reaction a 3-demethylubiquinol + S-adenosyl-L-methionine = a ubiquinol + S-adenosyl-L-homocysteine + H(+). It carries out the reaction a 3-(all-trans-polyprenyl)benzene-1,2-diol + S-adenosyl-L-methionine = a 2-methoxy-6-(all-trans-polyprenyl)phenol + S-adenosyl-L-homocysteine + H(+). The protein operates within cofactor biosynthesis; ubiquinone biosynthesis. In terms of biological role, O-methyltransferase that catalyzes the 2 O-methylation steps in the ubiquinone biosynthetic pathway. This chain is Ubiquinone biosynthesis O-methyltransferase, found in Pseudomonas savastanoi pv. phaseolicola (strain 1448A / Race 6) (Pseudomonas syringae pv. phaseolicola (strain 1448A / Race 6)).